The chain runs to 459 residues: Putative peroxisome assembly protein 12 (459 aa).

At 1 to 16 (MFMFNFDNGHDPNRPS) the chain is on the peroxisomal matrix side. The helical transmembrane segment at 17 to 44 (FFEMLNQHQMMPSFKPALKYIFTVLSQR) threads the bilayer. Residues 45-47 (NPK) lie on the Cytoplasmic side of the membrane. Residues 48–72 (FRYIVNYYDECFYSLLLLLEYHYLK) form a helical membrane-spanning segment. Topologically, residues 73–158 (YYEGSFSENF…AKDDLNTMIQ (86 aa)) are peroxisomal matrix. A helical transmembrane segment spans residues 159–196 (DSDRKESLIYLVLIPYFKGKLDEYYKKESDPLAELGLV). The Cytoplasmic segment spans residues 197–248 (SSDNNNNNNDNINDQIQQLEEQIQQQQTIVNGNNNSNNNNKKLKIKFLILIR). The chain crosses the membrane as a helical span at residues 249 to 287 (FLKGSKTLKKLKTIFLKVYPFISAIYEALFFIYQLLYLY). The Peroxisomal matrix portion of the chain corresponds to 288-355 (EYTNYYTPFF…LDSILDYSKY (68 aa)). The chain crosses the membrane as a helical span at residues 356–380 (ILPLSVFIFKSLEWWYSENRISAPT). The Cytoplasmic segment spans residues 381-459 (LPIPTPPTPS…EQLRKIYETV (79 aa)). Zn(2+) is bound by residues Cys-406, Cys-409, Cys-426, and Cys-429. An RING-type; degenerate zinc finger spans residues 406 to 444 (CPLCLKERTNPTICGSGFVFCYPCIFGYVNEHSKCPITF).

It belongs to the pex2/pex10/pex12 family. Component of the PEX2-PEX10-PEX12 retrotranslocation channel.

The protein localises to the peroxisome membrane. It participates in protein modification; protein ubiquitination. In terms of biological role, component of a retrotranslocation channel required for peroxisome organization by mediating export of the PEX5 receptor from peroxisomes to the cytosol, thereby promoting PEX5 recycling. The retrotranslocation channel is composed of PEX2, PEX10 and PEX12; each subunit contributing transmembrane segments that coassemble into an open channel that specifically allows the passage of PEX5 through the peroxisomal membrane. PEX12 also regulates PEX5 recycling by activating the E3 ubiquitin-protein ligase activity of PEX10. When PEX5 recycling is compromised, PEX12 stimulates PEX10-mediated polyubiquitination of PEX5, leading to its subsequent degradation. The polypeptide is Putative peroxisome assembly protein 12 (pex12) (Dictyostelium discoideum (Social amoeba)).